Here is a 427-residue protein sequence, read N- to C-terminus: Glutamate-1-semialdehyde 2,1-aminomutase (427 aa).

Residue Lys-265 is modified to N6-(pyridoxal phosphate)lysine.

Belongs to the class-III pyridoxal-phosphate-dependent aminotransferase family. HemL subfamily. As to quaternary structure, homodimer. It depends on pyridoxal 5'-phosphate as a cofactor.

Its subcellular location is the cytoplasm. The catalysed reaction is (S)-4-amino-5-oxopentanoate = 5-aminolevulinate. Its pathway is porphyrin-containing compound metabolism; protoporphyrin-IX biosynthesis; 5-aminolevulinate from L-glutamyl-tRNA(Glu): step 2/2. This chain is Glutamate-1-semialdehyde 2,1-aminomutase, found in Pseudomonas syringae pv. tomato (strain ATCC BAA-871 / DC3000).